We begin with the raw amino-acid sequence, 347 residues long: NADH-ubiquinone oxidoreductase chain 2 (347 aa).

The next 11 helical transmembrane spans lie at 3 to 23 (PLIFTMILLTVMLGTAIVMTT), 25 to 45 (HWVMAWIGFEMNMLAVIPILM), 59 to 79 (YFLTQATASMLLMLAIVINLV), 96 to 116 (IIMTLALAMKLGLAPFHFWVP), 122 to 142 (VQLSSGLILLTWQKLAPMSIL), 149 to 169 (INLDLLLLMSLLSILVGGWGG), 178 to 198 (IMAYSSIAHMGWMTAIMVYNP), 200 to 220 (MALLNLVIYILLTTTTFMMLM), 240 to 260 (LTTAILTIMLSLGGLPPLSGF), 276 to 296 (MIMPTIMAVMALLNLYFYMRL), and 326 to 346 (LSPLIILSTLILPLSPMLALL).

This sequence belongs to the complex I subunit 2 family. As to quaternary structure, core subunit of respiratory chain NADH dehydrogenase (Complex I) which is composed of 45 different subunits. Interacts with TMEM242.

The protein resides in the mitochondrion inner membrane. The enzyme catalyses a ubiquinone + NADH + 5 H(+)(in) = a ubiquinol + NAD(+) + 4 H(+)(out). Core subunit of the mitochondrial membrane respiratory chain NADH dehydrogenase (Complex I) which catalyzes electron transfer from NADH through the respiratory chain, using ubiquinone as an electron acceptor. Essential for the catalytic activity and assembly of complex I. This Nyctimene albiventer (Common tube-nosed fruit bat) protein is NADH-ubiquinone oxidoreductase chain 2.